The sequence spans 226 residues: Beta-phosphoglucomutase (226 aa).

Residue aspartate 7 is the Nucleophile of the active site. Aspartate 7 and aspartate 9 together coordinate Mg(2+). Aspartate 7 is subject to 4-aspartylphosphate. Aspartate 9 acts as the Proton donor/acceptor in catalysis. 7 residues coordinate beta-D-glucose 6-phosphate: aspartate 9, glycine 44, isoleucine 45, arginine 47, serine 116, arginine 117, and asparagine 118. Residue aspartate 170 coordinates Mg(2+).

The protein belongs to the HAD-like hydrolase superfamily. CbbY/CbbZ/Gph/YieH family. In terms of assembly, homodimer. The cofactor is Mg(2+). Post-translationally, autophosphorylated.

It is found in the cytoplasm. It carries out the reaction beta-D-glucose 1-phosphate = beta-D-glucose 6-phosphate. In terms of biological role, catalyzes the interconversion of D-glucose 1-phosphate (G1P) and D-glucose 6-phosphate (G6P), forming beta-D-glucose 1,6-(bis)phosphate (beta-G16P) as an intermediate. The sequence is that of Beta-phosphoglucomutase (yvdM) from Bacillus subtilis (strain 168).